Reading from the N-terminus, the 253-residue chain is HTH-type transcriptional regulator YdeO (253 aa).

The HTH araC/xylS-type domain maps to 137–233 (GKVRNIVNMK…GNSPKRVSKE (97 aa)). DNA-binding regions (H-T-H motif) lie at residues 154–175 (KDIC…KQEQ) and 200–223 (VNKI…RKHF).

Induces the expression of gadE and mdtEF. Could also regulate the expression of other genes involved in acid resistance. In Escherichia coli O6:H1 (strain CFT073 / ATCC 700928 / UPEC), this protein is HTH-type transcriptional regulator YdeO (ydeO).